The primary structure comprises 378 residues: MQSTIKPVEYDRPVAAGTVCGVGQAWAKVPDAPSAEERAALKARIKALLAREKAVLVAHYYVDAELQELADETGGCVADSLEMARFGRDHDAQTLIVAGVRFMGETAKILSPNKRILMPDLDATCSLDLGCPVDEFSAFCDAHPDRTVVVYANTSAAVKARADWMVTSSIGLEIVADLHARGEKIIWAPDRHLGSYIQKKTGADMLLWQGSCLVHDEFKGIELDLLRAEYPDAKVLVHPESPENVVAQADVVGSTTQLIDAAVKFDAKRFIVATDLGILHKMQLAAPGKTFIAAPTAGNSATCKSCAHCPWMAMNGLANLADVLERGHNEIFVDPAIGERARLPIDRMLEFAAAHKKRVQASGDLQRDQSLFANVGAA.

Iminosuccinate contacts are provided by His59 and Ser80. Cys125 provides a ligand contact to [4Fe-4S] cluster. Iminosuccinate contacts are provided by residues 151 to 153 and Ser168; that span reads YAN. A [4Fe-4S] cluster-binding site is contributed by Cys212. Iminosuccinate is bound by residues 238–240 and Thr255; that span reads HPE. Cys309 serves as a coordination point for [4Fe-4S] cluster.

It belongs to the quinolinate synthase family. Type 1 subfamily. Requires [4Fe-4S] cluster as cofactor.

It is found in the cytoplasm. It catalyses the reaction iminosuccinate + dihydroxyacetone phosphate = quinolinate + phosphate + 2 H2O + H(+). It functions in the pathway cofactor biosynthesis; NAD(+) biosynthesis; quinolinate from iminoaspartate: step 1/1. Its function is as follows. Catalyzes the condensation of iminoaspartate with dihydroxyacetone phosphate to form quinolinate. In Burkholderia cenocepacia (strain HI2424), this protein is Quinolinate synthase.